A 459-amino-acid chain; its full sequence is Bifunctional protein GlmU (459 aa).

The segment at 1–229 (MSNFAIILAA…FDESLGVNDR (229 aa)) is pyrophosphorylase. UDP-N-acetyl-alpha-D-glucosamine is bound by residues 8–11 (LAAG), K22, Q72, and 77–78 (GT). Residue D102 participates in Mg(2+) binding. UDP-N-acetyl-alpha-D-glucosamine-binding residues include G139, E154, N169, and N227. Residue N227 coordinates Mg(2+). Residues 230–250 (VALATAESVMRRRINHKHMVN) form a linker region. Residues 251 to 459 (GVSFVNPEAT…TRLPHHPKNQ (209 aa)) are N-acetyltransferase. Residues R332 and K350 each coordinate UDP-N-acetyl-alpha-D-glucosamine. Catalysis depends on H362, which acts as the Proton acceptor. Positions 365 and 376 each coordinate UDP-N-acetyl-alpha-D-glucosamine. Residues A379, 385–386 (NY), S404, A422, and R439 contribute to the acetyl-CoA site.

In the N-terminal section; belongs to the N-acetylglucosamine-1-phosphate uridyltransferase family. This sequence in the C-terminal section; belongs to the transferase hexapeptide repeat family. Homotrimer. Mg(2+) is required as a cofactor.

The protein resides in the cytoplasm. It catalyses the reaction alpha-D-glucosamine 1-phosphate + acetyl-CoA = N-acetyl-alpha-D-glucosamine 1-phosphate + CoA + H(+). The enzyme catalyses N-acetyl-alpha-D-glucosamine 1-phosphate + UTP + H(+) = UDP-N-acetyl-alpha-D-glucosamine + diphosphate. Its pathway is nucleotide-sugar biosynthesis; UDP-N-acetyl-alpha-D-glucosamine biosynthesis; N-acetyl-alpha-D-glucosamine 1-phosphate from alpha-D-glucosamine 6-phosphate (route II): step 2/2. It functions in the pathway nucleotide-sugar biosynthesis; UDP-N-acetyl-alpha-D-glucosamine biosynthesis; UDP-N-acetyl-alpha-D-glucosamine from N-acetyl-alpha-D-glucosamine 1-phosphate: step 1/1. The protein operates within bacterial outer membrane biogenesis; LPS lipid A biosynthesis. Its function is as follows. Catalyzes the last two sequential reactions in the de novo biosynthetic pathway for UDP-N-acetylglucosamine (UDP-GlcNAc). The C-terminal domain catalyzes the transfer of acetyl group from acetyl coenzyme A to glucosamine-1-phosphate (GlcN-1-P) to produce N-acetylglucosamine-1-phosphate (GlcNAc-1-P), which is converted into UDP-GlcNAc by the transfer of uridine 5-monophosphate (from uridine 5-triphosphate), a reaction catalyzed by the N-terminal domain. The polypeptide is Bifunctional protein GlmU (Streptococcus pneumoniae (strain JJA)).